The primary structure comprises 597 residues: MATLSMQVSILSKQVKNLNSFGMRASKLPMVARRVDVSTTRLRPICSASLQVEEETRRSGNYQASIWDNDFIQSFNTNKYRDEKHLNRKEELIAQVKVLLNTKMEAVKQLELIDDLRNLGLTYYFQDEFKKILTCIYNDHKCFKNEQVGDLYFTSLGFRLLRLHGFDVSEDVFSFFKNEDGSDFKASLGENTKDVLQLYEASFLVRVGEVTLEQARVFSTKILEKKVDEGINDEKLLAWIQHSLALPLHWRIQRLEARWFLDAYAARKDMNPLIFELGKIDFHIIQETQLEEVQEVSRWWTNSNLAEKLPFVRDRIVECYFWALGLFEPHEYGYQRKMAAIIITFVTIIDDVYDVYGTLDELQLFTDAIRKWDFESISTLPYYMQVCYLALYTYASELAYDILKDQGFNSISYLQRSWLSLVEGFFQEAKWYYAGYTPTLAEYLENAKVSISSPTIISQVYFTLPNSTERTVVENVYGYHNILYLSGMILRLADDLGTTQFELKRGDVQKAIQCYMKDNNATEKEGQEHVKYLLLEAWKEMNTAMADPDCPLSEDLVDAAANLGRASQFIYLEGDGHGVQHSEIHNQMGGLIFEPYV.

The N-terminal 47 residues, 1–47 (MATLSMQVSILSKQVKNLNSFGMRASKLPMVARRVDVSTTRLRPICS), are a transit peptide targeting the chloroplast. Mn(2+) is bound by residues aspartate 350 and aspartate 354. The DDXXD motif signature appears at 350 to 354 (DDVYD). Homodimerization stretches follow at residues 356-362 (YGTLDEL) and 428-464 (EAKW…YFTL). Residues aspartate 494 and glutamate 502 each contribute to the Mn(2+) site.

Belongs to the terpene synthase family. As to quaternary structure, homodimer. Mn(2+) is required as a cofactor. Mg(2+) serves as cofactor.

It is found in the plastid. It localises to the chloroplast. The catalysed reaction is (2E)-geranyl diphosphate = gamma-terpinene + diphosphate. It participates in secondary metabolite biosynthesis; terpenoid biosynthesis. Its function is as follows. Involved in the biosynthesis of phenolic monoterpenes natural products thymol and carvacrol which have a broad range of biological activities acting as antimicrobial compounds, insecticides, antioxidants and pharmaceutical agents. Monoterpene synthase which catalyzes the conversion of geranyl diphosphate (GPP) to gamma-terpinene. This chain is Gamma-terpinene synthase, chloroplastic, found in Thymus caespititius (Cretan thyme).